The primary structure comprises 120 residues: Spermidine export protein MdtJ (120 aa).

4 helical membrane passes run 1–21, 31–51, 54–74, and 81–101; these read MFYW…TLSM, TGFI…SFAV, IALG…ITLF, and EALS…IALI.

The protein belongs to the drug/metabolite transporter (DMT) superfamily. Small multidrug resistance (SMR) (TC 2.A.7.1) family. MdtJ subfamily. Forms a complex with MdtI.

The protein resides in the cell inner membrane. Its function is as follows. Catalyzes the excretion of spermidine. The polypeptide is Spermidine export protein MdtJ (Citrobacter koseri (strain ATCC BAA-895 / CDC 4225-83 / SGSC4696)).